Consider the following 203-residue polypeptide: Endo-type membrane-bound lytic murein transglycosylase A (203 aa).

The signal sequence occupies residues 1–15 (MKLRWLLILVVFLAG). Cys-16 carries N-palmitoyl cysteine lipidation. Cys-16 is lipidated: S-diacylglycerol cysteine.

Belongs to the transglycosylase Slt family.

It localises to the cell outer membrane. It carries out the reaction Endolytic cleavage of the (1-&gt;4)-beta-glycosidic linkage between N-acetylmuramic acid (MurNAc) and N-acetylglucosamine (GlcNAc) residues in peptidoglycan with concomitant formation of a 1,6-anhydrobond in the MurNAc residue.. Its function is as follows. Murein-degrading enzyme. May play a role in recycling of muropeptides during cell elongation and/or cell division. Preferentially cleaves at a distance of more than two disaccharide units from the ends of the glycan chain. The polypeptide is Endo-type membrane-bound lytic murein transglycosylase A (Klebsiella pneumoniae subsp. pneumoniae (strain ATCC 700721 / MGH 78578)).